The following is an 89-amino-acid chain: Small ribosomal subunit protein uS15 (89 aa).

It belongs to the universal ribosomal protein uS15 family. In terms of assembly, part of the 30S ribosomal subunit. Forms a bridge to the 50S subunit in the 70S ribosome, contacting the 23S rRNA.

Its function is as follows. One of the primary rRNA binding proteins, it binds directly to 16S rRNA where it helps nucleate assembly of the platform of the 30S subunit by binding and bridging several RNA helices of the 16S rRNA. In terms of biological role, forms an intersubunit bridge (bridge B4) with the 23S rRNA of the 50S subunit in the ribosome. In Synechocystis sp. (strain ATCC 27184 / PCC 6803 / Kazusa), this protein is Small ribosomal subunit protein uS15.